Consider the following 231-residue polypeptide: Equistatin (231 aa).

Residues 1–32 (MALSQNQAKFSKGFVVMIWVLFIACAITSTEA) form the signal peptide. 3 Thyroglobulin type-1 domains span residues 34–95 (LTKC…SPDC), 102–163 (LTLC…RPTC), and 167–231 (LSEC…RPTC). Disulfide bonds link C37-C56, C67-C74, C76-C95, C105-C124, C135-C142, C144-C163, C170-C191, C202-C209, and C211-C231.

This sequence belongs to the protease inhibitor I31 family.

It is found in the secreted. Functionally, potent inhibitor of papain-like cysteine proteinases (Ki=0.18-0.57 nM on papain), as well as of the aspartic proteinase cathepsin D (Ki=0.3-05 nM). The protein is Equistatin of Actinia equina (Beadlet anemone).